Reading from the N-terminus, the 353-residue chain is Terpene synthase 3 (353 aa).

Mg(2+) is bound by residues Asp-118, Asn-261, and Glu-269. A D(D/E)XX(D/E) motif motif is present at residues 118 to 122 (DDLLE). The NSE motif signature appears at 261–269 (NDTFLLKKE). Positions 342 to 349 (WCSKTTRY) match the WxxxxxRY motif motif.

Belongs to the terpene synthase family. Mg(2+) is required as a cofactor.

Terpene synthase that may be involved in the production of volatile terpenoids. Does not show detectable terpene products with either farnesyl diphosphate (FPP) or geranyl diphosphate (GPP). P.polycephalum has a unique biology and these volatile terpenoids could function in internal communication of P.polycephalum, to mark the territory that have been explored, or they may be involved in chemotaxis. The sequence is that of Terpene synthase 3 from Physarum polycephalum (Slime mold).